A 28-amino-acid chain; its full sequence is Short cationic peptide-1c (28 aa).

Residue E28 is modified to Glutamic acid 1-amide.

As to expression, expressed by the venom gland.

Its subcellular location is the secreted. This is Short cationic peptide-1c from Cupiennius salei (American wandering spider).